Reading from the N-terminus, the 460-residue chain is Putative arginine/ornithine antiporter (460 aa).

The Cytoplasmic segment spans residues 1 to 4; sequence MEKK. A helical transmembrane segment spans residues 5-25; sequence LGLSALTALVLSSMLGAGVFS. Over 26–38 the chain is Periplasmic; that stretch reads LPQNMAAVASPAA. The helical transmembrane segment at 39 to 59 threads the bilayer; that stretch reads LLIGWGITGAGILLLAFAMLI. Residues 60–92 are Cytoplasmic-facing; it reads LTRIRPELDGGIFTYAREGFGELIGFCSAWGYW. The chain crosses the membrane as a helical span at residues 93 to 113; sequence LCAVIANVSYLVIVFSALSFF. Residues 114–125 are Periplasmic-facing; sequence TDTPELRLFGDG. Residues 126–146 traverse the membrane as a helical segment; that stretch reads NTWQSIVGASALLWIVHFLIL. At 147–157 the chain is on the cytoplasmic side; the sequence is RGVQTAASINL. The chain crosses the membrane as a helical span at residues 158–178; sequence VATLAKLLPLGLFVVLAMMMF. Residues 179–201 are Periplasmic-facing; the sequence is KLDTFKLDFTGLALGVPVWEQVK. Residues 202–222 traverse the membrane as a helical segment; sequence NTMLITLWVFIGVEGAVVVSA. Over 223 to 235 the chain is Cytoplasmic; that stretch reads RARNKRDVGKATL. The chain crosses the membrane as a helical span at residues 236-256; it reads LAVLSALGVYLLVTLLSLGVV. Topologically, residues 257 to 282 are periplasmic; sequence ARPELAEIRNPSMAGLMVEMMGPWGE. The helical transmembrane segment at 283–303 threads the bilayer; the sequence is IIIAAGLIVSVCGAYLSWTIM. At 304-331 the chain is on the cytoplasmic side; that stretch reads AAEVPFLAATHKAFPRIFARQNAQAAPS. A helical membrane pass occupies residues 332–352; that stretch reads ASLWLTNICVQICLVLIWLTG. Topologically, residues 353 to 357 are periplasmic; it reads SDYNT. Residues 358–378 form a helical membrane-spanning segment; that stretch reads LLTIASEMILVPYFLVGAFLL. The Cytoplasmic segment spans residues 379-384; that stretch reads KIATRP. The next 2 membrane-spanning stretches (helical) occupy residues 385-405 and 406-426; these read LHKA…YASG and PMHL…FLYA. Topologically, residues 427 to 439 are cytoplasmic; sequence RKTHTHDNVLNRQ. A helical membrane pass occupies residues 440–460; the sequence is EMVLIGMLLIASVPATWMLVG.

Belongs to the amino acid-polyamine-organocation (APC) superfamily. Basic amino acid/polyamine antiporter (APA) (TC 2.A.3.2) family.

It localises to the cell inner membrane. The catalysed reaction is L-ornithine(in) + L-arginine(out) = L-ornithine(out) + L-arginine(in). In terms of biological role, catalyzes electroneutral exchange between arginine and ornithine to allow high-efficiency energy conversion in the arginine deiminase pathway. The chain is Putative arginine/ornithine antiporter (ydgI) from Escherichia coli O6:H1 (strain CFT073 / ATCC 700928 / UPEC).